Consider the following 169-residue polypeptide: PTS system glucose-specific EIIA component (169 aa).

Positions Asp39–Asn143 constitute a PTS EIIA type-1 domain. Zn(2+) is bound by residues His76 and His91. The active-site Tele-phosphohistidine intermediate; for EIIA activity is the His91. His91 is subject to Phosphohistidine; by HPr.

Heterodimer with glycerol kinase (glpk). The cofactor is Zn(2+).

It localises to the cytoplasm. Its function is as follows. The phosphoenolpyruvate-dependent sugar phosphotransferase system (sugar PTS), a major carbohydrate active transport system, catalyzes the phosphorylation of incoming sugar substrates concomitantly with their translocation across the cell membrane. The enzyme II complex composed of PtsG and Crr is involved in glucose transport. This chain is PTS system glucose-specific EIIA component (crr), found in Salmonella typhi.